Reading from the N-terminus, the 175-residue chain is Inosine/xanthosine triphosphatase (175 aa).

A substrate-binding site is contributed by 8-13 (TTNPAK). Residues Asp38 and Glu68 each coordinate Mg(2+). 68 to 69 (EA) is a substrate binding site.

This sequence belongs to the YjjX NTPase family. Homodimer. The cofactor is Mg(2+). It depends on Mn(2+) as a cofactor.

It carries out the reaction XTP + H2O = XDP + phosphate + H(+). The enzyme catalyses ITP + H2O = IDP + phosphate + H(+). Functionally, phosphatase that hydrolyzes non-canonical purine nucleotides such as XTP and ITP to their respective diphosphate derivatives. Probably excludes non-canonical purines from DNA/RNA precursor pool, thus preventing their incorporation into DNA/RNA and avoiding chromosomal lesions. This chain is Inosine/xanthosine triphosphatase, found in Yersinia enterocolitica serotype O:8 / biotype 1B (strain NCTC 13174 / 8081).